Consider the following 138-residue polypeptide: Lutropin subunit beta (138 aa).

An N-terminal signal peptide occupies residues 1–17 (LQGLLLWLLLSVGGVWA). 6 disulfides stabilise this stretch: cysteine 26–cysteine 74, cysteine 40–cysteine 89, cysteine 43–cysteine 127, cysteine 51–cysteine 105, cysteine 55–cysteine 107, and cysteine 110–cysteine 117. Asparagine 30 carries N-linked (GlcNAc...) asparagine glycosylation.

This sequence belongs to the glycoprotein hormones subunit beta family. As to quaternary structure, heterodimer of a common alpha chain and a unique beta chain which confers biological specificity to thyrotropin, lutropin, follitropin and gonadotropin.

It is found in the secreted. In terms of biological role, promotes spermatogenesis and ovulation by stimulating the testes and ovaries to synthesize steroids. In Canis lupus familiaris (Dog), this protein is Lutropin subunit beta (LHB).